Reading from the N-terminus, the 134-residue chain is Cytochrome b5 (134 aa).

Alanine 2 bears the N-acetylalanine mark. Lysine 7, lysine 10, and lysine 19 each carry N6-acetyllysine. Residues 9–85 form the Cytochrome b5 heme-binding domain; sequence VKYYTLEEIQ…SKTFIIGELH (77 aa). Residues histidine 44 and histidine 68 each coordinate heme. A helical transmembrane segment spans residues 109 to 131; it reads WWTNWLIPAISALFVALIYHLYT.

This sequence belongs to the cytochrome b5 family.

Its subcellular location is the endoplasmic reticulum membrane. The protein resides in the microsome membrane. Functionally, cytochrome b5 is a membrane-bound hemoprotein functioning as an electron carrier for several membrane-bound oxygenases. The polypeptide is Cytochrome b5 (CYB5A) (Bos taurus (Bovine)).